The chain runs to 40 residues: Omega-conotoxin RsXXVIA (40 aa).

Post-translationally, contains 4 disulfide bonds. Expressed by the venom duct.

The protein resides in the secreted. Omega-conotoxins act at presynaptic membranes, they bind and block voltage-gated calcium channels (Cav). This toxin inhibits rat Cav2.2/CACNA1B calcium channels in a dose-dependent manner (EC(50)=2.8 uM), whose effect is partially reversed after washing. In vivo, when injected into mice, it shows both an analgesic effect in acute thermal pain at 30 and 45 minutes post-injection and an anti-nociceptive effect in a formalin chronic pain test. This is Omega-conotoxin RsXXVIA from Conus regularis (Regular cone).